The primary structure comprises 207 residues: MEVDVNGESRSALTTLPLPVAEASSPGKAEAEKPRCSSTPCSPMRRTVSGYQILHMDSNYLVGFTTGEELLKLAQKCTGAEESKGEAVPSLRSKQLDVGLARSSRLYKTRSRYYQPYEIPAVNGRRRRRMPSSGDKCTKSLPYEPYKALHGPLPLCLLKGKRAHSKSLDYLNLDKMNIKEPADTEVLQYQLQHLTLRGDRVFARNNT.

Met-1 carries the post-translational modification N-acetylmethionine. The tract at residues 1–41 (MEVDVNGESRSALTTLPLPVAEASSPGKAEAEKPRCSSTPC) is disordered. Phosphoserine occurs at positions 25, 140, and 167.

Belongs to the UNC119-binding protein family. Interacts with UNC119 and UNC119B; interaction preferentially takes place when UNC119 and UNC119B are unliganded with myristoylated proteins.

The protein resides in the cytoplasm. The protein localises to the cell projection. Its subcellular location is the cilium. Regulates the macrophage function, by enhancing the resolution of inflammation and wound repair functions mediated by M2 macrophages. The regulation of macrophage function is, due at least in part, to its ability to inhibit glycolysis. May play also a role in trafficking of proteins via its interaction with UNC119 and UNC119B cargo adapters: may help the release of UNC119 and UNC119B cargo or the recycling of UNC119 and UNC119B. May play a role in ciliary membrane localization via its interaction with UNC119B and protein transport into photoreceptor cells. The polypeptide is Macrophage immunometabolism regulator (MACIR) (Bos taurus (Bovine)).